Consider the following 304-residue polypeptide: Polyisoprenyl-teichoic acid--peptidoglycan teichoic acid transferase TagU (304 aa).

The Cytoplasmic segment spans residues 1–3; sequence MKK. The chain crosses the membrane as a helical; Signal-anchor for type II membrane protein span at residues 4 to 24; the sequence is ALIAIGLILGTITVAIIGYGI. The Extracellular segment spans residues 25-304; it reads YLYSSIQNTA…GELKSHLELS (280 aa).

Belongs to the LytR/CpsA/Psr (LCP) family.

Its subcellular location is the cell membrane. The protein operates within cell wall biogenesis. Functionally, may catalyze the final step in cell wall teichoic acid biosynthesis, the transfer of the anionic cell wall polymers (APs) from their lipid-linked precursor to the cell wall peptidoglycan (PG). This is Polyisoprenyl-teichoic acid--peptidoglycan teichoic acid transferase TagU from Halalkalibacterium halodurans (strain ATCC BAA-125 / DSM 18197 / FERM 7344 / JCM 9153 / C-125) (Bacillus halodurans).